The following is a 156-amino-acid chain: UPF0039 protein Mb2876c (156 aa).

The 143-residue stretch at 8 to 150 (VWAKDLDARA…PHVPMLRPGS (143 aa)) folds into the N-acetyltransferase domain.

This sequence belongs to the UPF0039 (ElaA) family.

In Mycobacterium bovis (strain ATCC BAA-935 / AF2122/97), this protein is UPF0039 protein Mb2876c.